The sequence spans 866 residues: Interleukin-17 receptor A (866 aa).

An N-terminal signal peptide occupies residues 1-32; sequence MGAARSPPSAVPGPLLGLLLLLLGVLAPGGAS. At 33 to 320 the chain is on the extracellular side; the sequence is LRLLDHRALV…EPIPDYMPLW (288 aa). A disulfide bridge links Cys43 with Cys50. 3 N-linked (GlcNAc...) asparagine glycosylation sites follow: Asn49, Asn54, and Asn67. Cystine bridges form between Cys57/Cys126 and Cys185/Cys196. N-linked (GlcNAc...) asparagine glycans are attached at residues Asn206, Asn225, Asn242, and Asn265. Cystine bridges form between Cys245-Cys276, Cys277-Cys303, and Cys290-Cys294. The chain crosses the membrane as a helical span at residues 321-341; that stretch reads VYWFITGISILLVGSVILLIV. The Cytoplasmic portion of the chain corresponds to 342–866; the sequence is CMTWRLAGPG…MGSESEGPSA (525 aa). Residues 377 to 534 form the SEFIR domain; it reads PRKVWIIYSA…LMDRFEEVYF (158 aa). Ser708 and Ser736 each carry phosphoserine. Disordered regions lie at residues 717–736 and 773–840; these read LFLP…PMAS and MVLT…RSLQ. Residues 788–801 are compositionally biased toward polar residues; it reads QSVQSDQGYISRSS. Acidic residues predominate over residues 809-819; it reads TEMEEEEEEEQ.

Forms heterodimers with IL17RC; the heterodimer binds IL17A and IL17F homodimers as well as the heterodimer formed by IL17A and IL17F. Forms complexes with 2:1 binding stoichiometry: two receptor chains for one interleukin molecule. IL17A homodimer preferentially drives the formation of IL17RA-IL17RC heterodimeric receptor complex, whereas IL17F homodimer forms predominantly complexes with IL17RC homodimer. IL17A homodimer adopts an asymmetrical ternary structure with one IL17RA molecule, allowing for high affinity interactions of one IL17A monomer with one IL17RA molecule (via D1 and D2 domains), while disfavoring binding of a second IL17RA molecule on the other IL17A monomer. IL17A-IL17F forms complexes with IL17RA-IL17RC, but with lower affinity when compared to IL17A homodimer. IL17RA chain cannot distinguish between IL17A and IL17F molecules, potentially enabling the formation of topologically distinct complexes. Interacts with TRAF3IP2. Forms heterodimers with IL17RE; the heterodimer binds IL17C. In terms of assembly, (Microbial infection) Interacts with SARS coronavirus-2/SARS-CoV-2 virus protein ORF8. In terms of processing, glycosylated. In terms of tissue distribution, widely expressed.

The protein localises to the cell membrane. It localises to the secreted. Receptor for IL17A and IL17F, major effector cytokines of innate and adaptive immune system involved in antimicrobial host defense and maintenance of tissue integrity. Receptor for IL17A. Receptor for IL17F. Binds to IL17A with higher affinity than to IL17F. Binds IL17A and IL17F homodimers as part of a heterodimeric complex with IL17RC. Also binds heterodimers formed by IL17A and IL17F as part of a heterodimeric complex with IL17RC. Cytokine binding triggers homotypic interaction of IL17RA and IL17RC chains with TRAF3IP2 adapter, leading to TRAF6-mediated activation of NF-kappa-B and MAPkinase pathways, ultimately resulting in transcriptional activation of cytokines, chemokines, antimicrobial peptides and matrix metalloproteinases, with potential strong immune inflammation. Involved in antimicrobial host defense primarily promoting neutrophil activation and recruitment at infection sites to destroy extracellular bacteria and fungi. In secondary lymphoid organs, contributes to germinal center formation by regulating the chemotactic response of B cells to CXCL12 and CXCL13, enhancing retention of B cells within the germinal centers, B cell somatic hypermutation rate and selection toward plasma cells. Plays a role in the maintenance of the integrity of epithelial barriers during homeostasis and pathogen infection. Stimulates the production of antimicrobial beta-defensins DEFB1, DEFB103A, and DEFB104A by mucosal epithelial cells, limiting the entry of microbes through the epithelial barriers. Involved in antiviral host defense through various mechanisms. Enhances immunity against West Nile virus by promoting T cell cytotoxicity. Contributes to Influenza virus clearance by driving the differentiation of B-1a B cells, providing for production of virus-specific IgM antibodies at first line of host defense. Receptor for IL17C as part of a heterodimeric complex with IL17RE. Its function is as follows. (Microbial infection) Receptor for SARS coronavirus-2/SARS-CoV-2 virus protein ORF8, leading to IL17 pathway activation and an increased secretion of pro-inflammatory factors through activating NF-kappa-B signaling pathway. This Homo sapiens (Human) protein is Interleukin-17 receptor A.